Here is a 138-residue protein sequence, read N- to C-terminus: Large-conductance mechanosensitive channel (138 aa).

The next 3 membrane-spanning stretches (helical) occupy residues 19–39, 40–60, and 81–101; these read VGVI…GDVI, MPVI…IGLS, and GSFL…FIVI.

The protein belongs to the MscL family. Homopentamer.

It is found in the cell inner membrane. Functionally, channel that opens in response to stretch forces in the membrane lipid bilayer. May participate in the regulation of osmotic pressure changes within the cell. This is Large-conductance mechanosensitive channel from Afipia carboxidovorans (strain ATCC 49405 / DSM 1227 / KCTC 32145 / OM5) (Oligotropha carboxidovorans).